The chain runs to 667 residues: Bifunctional polymyxin resistance protein ArnA (667 aa).

The segment at 1 to 304 is formyltransferase ArnAFT; that stretch reads MKAIVFAYHD…EMGIVTDVRL (304 aa). The active-site Proton donor; for formyltransferase activity is H104. (6R)-10-formyltetrahydrofolate-binding positions include R114 and 136–140; that span reads VKKAD. Residues 314–667 form a dehydrogenase ArnADH region; that stretch reads RRTRVLILGV…TAAPKDELNA (354 aa). NAD(+) is bound by residues D347 and 368 to 369; that span reads DI. UDP-alpha-D-glucuronate-binding positions include A393, Y398, and 432–433; that span reads TS. Catalysis depends on E434, which acts as the Proton acceptor; for decarboxylase activity. UDP-alpha-D-glucuronate contacts are provided by residues R460, N492, 526–535, and Y613; that span reads KLVDGGAQKR. Catalysis depends on R619, which acts as the Proton donor; for decarboxylase activity.

The protein in the N-terminal section; belongs to the Fmt family. UDP-L-Ara4N formyltransferase subfamily. It in the C-terminal section; belongs to the NAD(P)-dependent epimerase/dehydratase family. UDP-glucuronic acid decarboxylase subfamily. As to quaternary structure, homohexamer, formed by a dimer of trimers.

The catalysed reaction is UDP-alpha-D-glucuronate + NAD(+) = UDP-beta-L-threo-pentopyranos-4-ulose + CO2 + NADH. It carries out the reaction UDP-4-amino-4-deoxy-beta-L-arabinose + (6R)-10-formyltetrahydrofolate = UDP-4-deoxy-4-formamido-beta-L-arabinose + (6S)-5,6,7,8-tetrahydrofolate + H(+). It participates in nucleotide-sugar biosynthesis; UDP-4-deoxy-4-formamido-beta-L-arabinose biosynthesis; UDP-4-deoxy-4-formamido-beta-L-arabinose from UDP-alpha-D-glucuronate: step 1/3. The protein operates within nucleotide-sugar biosynthesis; UDP-4-deoxy-4-formamido-beta-L-arabinose biosynthesis; UDP-4-deoxy-4-formamido-beta-L-arabinose from UDP-alpha-D-glucuronate: step 3/3. Its pathway is bacterial outer membrane biogenesis; lipopolysaccharide biosynthesis. Functionally, bifunctional enzyme that catalyzes the oxidative decarboxylation of UDP-glucuronic acid (UDP-GlcUA) to UDP-4-keto-arabinose (UDP-Ara4O) and the addition of a formyl group to UDP-4-amino-4-deoxy-L-arabinose (UDP-L-Ara4N) to form UDP-L-4-formamido-arabinose (UDP-L-Ara4FN). The modified arabinose is attached to lipid A and is required for resistance to polymyxin and cationic antimicrobial peptides. The protein is Bifunctional polymyxin resistance protein ArnA of Yersinia pseudotuberculosis serotype IB (strain PB1/+).